A 146-amino-acid chain; its full sequence is Globin-2B (146 aa).

Positions 9–146 (QLTADVKKDL…KLVGVVQAAL (138 aa)) constitute a Globin domain. His101 serves as a coordination point for heme b.

The protein belongs to the globin family. In terms of assembly, homodimer.

The polypeptide is Globin-2B (Anadara trapezia (Sydney cockle)).